Consider the following 304-residue polypeptide: Ornithine carbamoyltransferase (304 aa).

Residues 51-54, Gln78, Arg102, and 129-132 contribute to the carbamoyl phosphate site; these read STRT and HPVQ. Residues Asn157, Asp221, and 225 to 226 contribute to the L-ornithine site; that span reads SM. Residues 261 to 262 and Arg289 each bind carbamoyl phosphate; that span reads CL.

The protein belongs to the aspartate/ornithine carbamoyltransferase superfamily. OTCase family.

It localises to the cytoplasm. The enzyme catalyses carbamoyl phosphate + L-ornithine = L-citrulline + phosphate + H(+). Its pathway is amino-acid degradation; L-arginine degradation via ADI pathway; carbamoyl phosphate from L-arginine: step 2/2. In terms of biological role, reversibly catalyzes the transfer of the carbamoyl group from carbamoyl phosphate (CP) to the N(epsilon) atom of ornithine (ORN) to produce L-citrulline. This is Ornithine carbamoyltransferase from Campylobacter curvus (strain 525.92).